The primary structure comprises 681 residues: MNAVALRVAELRRVLRHHEYKYHVEDAPEIPDIEYDKLMQELKALEADHPELVTSDSPTQRVGAAPLAAFEQVRHEVPMLSLDNVFDEESYLAFSKRIGDRLKNGDDLTFCCELKLDGLAVSLLYEEGILVQAATRGDGTTGENITSNIRTVGAIPLRLEGENIPRRVEVRGEVFMKHGGFEKLNEEARRTGSKVFANPRNAAAGSLRQLDPRITAKRPLTFFCYGVGLLEGGELPASHWERLMQFKAWGLPVSDRIKLCTGPAEVLDFYRQVEQTRSSLGFDIDGVVVKVDSLALQERLGFVARAPRWAVAFKFPAQEQLTWVRDVEFQVGRTGAITPVARLEPVAVAGVIVSNATLHNADEIERLGLQIGDRVIVRRAGDVIPQIVGIVESERPETVQPIVFPAACPVCGSDVERVEGEAVTRCTGGLICGAQRKEALKHFVSRRALDVEGMGDKIIDQLVEKEYVKTPADLFRLSAGIMTGLDRMGPKSAMNLVNALEKAKSTTLARFLYALGIRDVGESTAANLAAHFGSLETLFAADEDALLEVPDVGKIVAAHVRHFLEEEHNQTVIRELTDPAGINIYWPEVKVVNAEEIDSPFAGKTVVLTGSLSILSRDEAKDRLTALGAKVSGSVSKKTDMVIAGEAAGSKLAKAQELGIPVIDEAEMIRLLNNHGDVSTL.

Residues 32 to 36 (DIEYD), 81 to 82 (SL), and Glu-113 each bind NAD(+). Lys-115 acts as the N6-AMP-lysine intermediate in catalysis. Residues Arg-136, Glu-173, Lys-290, and Lys-314 each coordinate NAD(+). Positions 408, 411, 426, and 432 each coordinate Zn(2+). The BRCT domain maps to 596-681 (EIDSPFAGKT…LNNHGDVSTL (86 aa)).

This sequence belongs to the NAD-dependent DNA ligase family. LigA subfamily. The cofactor is Mg(2+). Requires Mn(2+) as cofactor.

The catalysed reaction is NAD(+) + (deoxyribonucleotide)n-3'-hydroxyl + 5'-phospho-(deoxyribonucleotide)m = (deoxyribonucleotide)n+m + AMP + beta-nicotinamide D-nucleotide.. Its function is as follows. DNA ligase that catalyzes the formation of phosphodiester linkages between 5'-phosphoryl and 3'-hydroxyl groups in double-stranded DNA using NAD as a coenzyme and as the energy source for the reaction. It is essential for DNA replication and repair of damaged DNA. This is DNA ligase from Pectobacterium atrosepticum (strain SCRI 1043 / ATCC BAA-672) (Erwinia carotovora subsp. atroseptica).